The sequence spans 370 residues: 3-dehydroquinate synthase (370 aa).

NAD(+) contacts are provided by residues 108 to 112, 132 to 133, lysine 145, and lysine 154; these read GVIGD and TT. Zn(2+) contacts are provided by glutamate 187, histidine 249, and histidine 267.

Belongs to the sugar phosphate cyclases superfamily. Dehydroquinate synthase family. Co(2+) is required as a cofactor. Zn(2+) serves as cofactor. It depends on NAD(+) as a cofactor.

The protein localises to the cytoplasm. It carries out the reaction 7-phospho-2-dehydro-3-deoxy-D-arabino-heptonate = 3-dehydroquinate + phosphate. The protein operates within metabolic intermediate biosynthesis; chorismate biosynthesis; chorismate from D-erythrose 4-phosphate and phosphoenolpyruvate: step 2/7. Its function is as follows. Catalyzes the conversion of 3-deoxy-D-arabino-heptulosonate 7-phosphate (DAHP) to dehydroquinate (DHQ). This chain is 3-dehydroquinate synthase, found in Cereibacter sphaeroides (strain ATCC 17025 / ATH 2.4.3) (Rhodobacter sphaeroides).